Reading from the N-terminus, the 173-residue chain is Crossover junction endodeoxyribonuclease RuvC (173 aa).

Catalysis depends on residues Asp-8, Glu-67, and Asp-139. Mg(2+)-binding residues include Asp-8, Glu-67, and Asp-139.

Belongs to the RuvC family. Homodimer which binds Holliday junction (HJ) DNA. The HJ becomes 2-fold symmetrical on binding to RuvC with unstacked arms; it has a different conformation from HJ DNA in complex with RuvA. In the full resolvosome a probable DNA-RuvA(4)-RuvB(12)-RuvC(2) complex forms which resolves the HJ. Requires Mg(2+) as cofactor.

The protein localises to the cytoplasm. The enzyme catalyses Endonucleolytic cleavage at a junction such as a reciprocal single-stranded crossover between two homologous DNA duplexes (Holliday junction).. Its function is as follows. The RuvA-RuvB-RuvC complex processes Holliday junction (HJ) DNA during genetic recombination and DNA repair. Endonuclease that resolves HJ intermediates. Cleaves cruciform DNA by making single-stranded nicks across the HJ at symmetrical positions within the homologous arms, yielding a 5'-phosphate and a 3'-hydroxyl group; requires a central core of homology in the junction. The consensus cleavage sequence is 5'-(A/T)TT(C/G)-3'. Cleavage occurs on the 3'-side of the TT dinucleotide at the point of strand exchange. HJ branch migration catalyzed by RuvA-RuvB allows RuvC to scan DNA until it finds its consensus sequence, where it cleaves and resolves the cruciform DNA. The protein is Crossover junction endodeoxyribonuclease RuvC of Shewanella oneidensis (strain ATCC 700550 / JCM 31522 / CIP 106686 / LMG 19005 / NCIMB 14063 / MR-1).